Reading from the N-terminus, the 155-residue chain is Small ribosomal subunit protein uS7 (155 aa).

The protein belongs to the universal ribosomal protein uS7 family. As to quaternary structure, part of the 30S ribosomal subunit. Contacts proteins S9 and S11.

One of the primary rRNA binding proteins, it binds directly to 16S rRNA where it nucleates assembly of the head domain of the 30S subunit. Is located at the subunit interface close to the decoding center, probably blocks exit of the E-site tRNA. The protein is Small ribosomal subunit protein uS7 of Xanthomonas oryzae pv. oryzae (strain MAFF 311018).